The chain runs to 86 residues: MGEVVVILKIMPESPDVDLEKLQADIRAKVSGIEDMKVEPIGFGLSAIKIAMITEDDEGAGDKIEGLFSQIPGIDRTEIESLNRLL.

It belongs to the EF-1-beta/EF-1-delta family.

Functionally, promotes the exchange of GDP for GTP in EF-1-alpha/GDP, thus allowing the regeneration of EF-1-alpha/GTP that could then be used to form the ternary complex EF-1-alpha/GTP/AAtRNA. In Methanocorpusculum labreanum (strain ATCC 43576 / DSM 4855 / Z), this protein is Elongation factor 1-beta.